A 115-amino-acid chain; its full sequence is Peptidyl-tRNA hydrolase (115 aa).

The protein belongs to the PTH2 family.

It is found in the cytoplasm. It catalyses the reaction an N-acyl-L-alpha-aminoacyl-tRNA + H2O = an N-acyl-L-amino acid + a tRNA + H(+). The natural substrate for this enzyme may be peptidyl-tRNAs which drop off the ribosome during protein synthesis. This chain is Peptidyl-tRNA hydrolase (pth), found in Nanoarchaeum equitans (strain Kin4-M).